An 85-amino-acid chain; its full sequence is Toxin Cll5c* (85 aa).

An N-terminal signal peptide occupies residues 1-17 (MNSLLIITACLVLFVWA). One can recognise an LCN-type CS-alpha/beta domain in the interval 18–83 (KEGYLVNKST…TYPLPNKSCS (66 aa)). Cystine bridges form between Cys29–Cys82, Cys33–Cys58, Cys42–Cys63, and Cys46–Cys65. A propeptide spans 84–85 (KK) (removed by a carboxypeptidase).

This sequence belongs to the long (4 C-C) scorpion toxin superfamily. Sodium channel inhibitor family. Beta subfamily. Expressed by the venom gland.

The protein resides in the secreted. Functionally, beta toxins bind voltage-independently at site-4 of sodium channels (Nav) and shift the voltage of activation toward more negative potentials thereby affecting sodium channel activation and promoting spontaneous and repetitive firing. The polypeptide is Toxin Cll5c* (Centruroides limpidus (Mexican scorpion)).